The chain runs to 176 residues: Protein GrpE (176 aa).

It belongs to the GrpE family. As to quaternary structure, homodimer.

Its subcellular location is the cytoplasm. In terms of biological role, participates actively in the response to hyperosmotic and heat shock by preventing the aggregation of stress-denatured proteins, in association with DnaK and GrpE. It is the nucleotide exchange factor for DnaK and may function as a thermosensor. Unfolded proteins bind initially to DnaJ; upon interaction with the DnaJ-bound protein, DnaK hydrolyzes its bound ATP, resulting in the formation of a stable complex. GrpE releases ADP from DnaK; ATP binding to DnaK triggers the release of the substrate protein, thus completing the reaction cycle. Several rounds of ATP-dependent interactions between DnaJ, DnaK and GrpE are required for fully efficient folding. This chain is Protein GrpE, found in Meiothermus ruber.